We begin with the raw amino-acid sequence, 255 residues long: Imidazole glycerol phosphate synthase subunit HisF (255 aa).

Active-site residues include Asp11 and Asp130.

It belongs to the HisA/HisF family. Heterodimer of HisH and HisF.

Its subcellular location is the cytoplasm. The catalysed reaction is 5-[(5-phospho-1-deoxy-D-ribulos-1-ylimino)methylamino]-1-(5-phospho-beta-D-ribosyl)imidazole-4-carboxamide + L-glutamine = D-erythro-1-(imidazol-4-yl)glycerol 3-phosphate + 5-amino-1-(5-phospho-beta-D-ribosyl)imidazole-4-carboxamide + L-glutamate + H(+). The protein operates within amino-acid biosynthesis; L-histidine biosynthesis; L-histidine from 5-phospho-alpha-D-ribose 1-diphosphate: step 5/9. Functionally, IGPS catalyzes the conversion of PRFAR and glutamine to IGP, AICAR and glutamate. The HisF subunit catalyzes the cyclization activity that produces IGP and AICAR from PRFAR using the ammonia provided by the HisH subunit. The polypeptide is Imidazole glycerol phosphate synthase subunit HisF (Exiguobacterium sp. (strain ATCC BAA-1283 / AT1b)).